Reading from the N-terminus, the 305-residue chain is Oxygen-dependent coproporphyrinogen-III oxidase (305 aa).

Ser98 contacts substrate. His102 and His112 together coordinate a divalent metal cation. Residue His112 is the Proton donor of the active site. A substrate-binding site is contributed by Asn114 to Arg116. A divalent metal cation contacts are provided by His151 and His181. Positions Tyr246–Glu281 are important for dimerization. Gly264–Arg266 is a binding site for substrate.

It belongs to the aerobic coproporphyrinogen-III oxidase family. As to quaternary structure, homodimer. Requires a divalent metal cation as cofactor.

It localises to the cytoplasm. It carries out the reaction coproporphyrinogen III + O2 + 2 H(+) = protoporphyrinogen IX + 2 CO2 + 2 H2O. The protein operates within porphyrin-containing compound metabolism; protoporphyrin-IX biosynthesis; protoporphyrinogen-IX from coproporphyrinogen-III (O2 route): step 1/1. Its function is as follows. Involved in the heme biosynthesis. Catalyzes the aerobic oxidative decarboxylation of propionate groups of rings A and B of coproporphyrinogen-III to yield the vinyl groups in protoporphyrinogen-IX. The protein is Oxygen-dependent coproporphyrinogen-III oxidase of Vibrio vulnificus (strain YJ016).